Reading from the N-terminus, the 561-residue chain is Asparagine synthetase [glutamine-hydrolyzing] (561 aa).

Cysteine 2 serves as the catalytic For GATase activity. A Glutamine amidotransferase type-2 domain is found at 2–191 (CGIWALFGSD…PGHYEVLDLK (190 aa)). Residues 49-53 (RLAVV), 75-77 (NGE), and aspartate 97 contribute to the L-glutamine site. Residues 213–536 (HALYDNVEKL…PGRADWLSHY (324 aa)) form the Asparagine synthetase domain. ATP is bound by residues leucine 256, isoleucine 288, and 363 to 364 (SG). The residue at position 385 (lysine 385) is an N6-acetyllysine. Threonine 545 is subject to Phosphothreonine. Serine 557 is subject to Phosphoserine.

It catalyses the reaction L-aspartate + L-glutamine + ATP + H2O = L-asparagine + L-glutamate + AMP + diphosphate + H(+). Its pathway is amino-acid biosynthesis; L-asparagine biosynthesis; L-asparagine from L-aspartate (L-Gln route): step 1/1. This chain is Asparagine synthetase [glutamine-hydrolyzing] (ASNS), found in Pongo abelii (Sumatran orangutan).